Consider the following 329-residue polypeptide: Acetyl-coenzyme A carboxylase carboxyl transferase subunit alpha (329 aa).

Residues 40–294 enclose the CoA carboxyltransferase C-terminal domain; it reads QLETLAARRR…KESLIRNLRE (255 aa).

Belongs to the AccA family. As to quaternary structure, acetyl-CoA carboxylase is a heterohexamer composed of biotin carboxyl carrier protein (AccB), biotin carboxylase (AccC) and two subunits each of ACCase subunit alpha (AccA) and ACCase subunit beta (AccD).

The protein resides in the cytoplasm. The catalysed reaction is N(6)-carboxybiotinyl-L-lysyl-[protein] + acetyl-CoA = N(6)-biotinyl-L-lysyl-[protein] + malonyl-CoA. The protein operates within lipid metabolism; malonyl-CoA biosynthesis; malonyl-CoA from acetyl-CoA: step 1/1. Its function is as follows. Component of the acetyl coenzyme A carboxylase (ACC) complex. First, biotin carboxylase catalyzes the carboxylation of biotin on its carrier protein (BCCP) and then the CO(2) group is transferred by the carboxyltransferase to acetyl-CoA to form malonyl-CoA. The polypeptide is Acetyl-coenzyme A carboxylase carboxyl transferase subunit alpha (Prochlorococcus marinus (strain MIT 9211)).